Here is a 229-residue protein sequence, read N- to C-terminus: Large ribosomal subunit protein uL1 (229 aa).

Belongs to the universal ribosomal protein uL1 family. As to quaternary structure, part of the 50S ribosomal subunit.

Functionally, binds directly to 23S rRNA. The L1 stalk is quite mobile in the ribosome, and is involved in E site tRNA release. In terms of biological role, protein L1 is also a translational repressor protein, it controls the translation of the L11 operon by binding to its mRNA. This chain is Large ribosomal subunit protein uL1, found in Magnetococcus marinus (strain ATCC BAA-1437 / JCM 17883 / MC-1).